A 389-amino-acid chain; its full sequence is Lipid-A-disaccharide synthase (389 aa).

This sequence belongs to the LpxB family.

The enzyme catalyses a lipid X + a UDP-2-N,3-O-bis[(3R)-3-hydroxyacyl]-alpha-D-glucosamine = a lipid A disaccharide + UDP + H(+). The protein operates within bacterial outer membrane biogenesis; LPS lipid A biosynthesis. Condensation of UDP-2,3-diacylglucosamine and 2,3-diacylglucosamine-1-phosphate to form lipid A disaccharide, a precursor of lipid A, a phosphorylated glycolipid that anchors the lipopolysaccharide to the outer membrane of the cell. The polypeptide is Lipid-A-disaccharide synthase (Burkholderia vietnamiensis (strain G4 / LMG 22486) (Burkholderia cepacia (strain R1808))).